Here is a 239-residue protein sequence, read N- to C-terminus: Probable transcriptional regulatory protein VC_A0006 (239 aa).

The protein belongs to the TACO1 family.

It is found in the cytoplasm. This Vibrio cholerae serotype O1 (strain ATCC 39315 / El Tor Inaba N16961) protein is Probable transcriptional regulatory protein VC_A0006.